We begin with the raw amino-acid sequence, 475 residues long: Ribulose bisphosphate carboxylase large chain (475 aa).

The propeptide occupies 1-2 (MS). The residue at position 3 (Pro3) is an N-acetylproline. N6,N6,N6-trimethyllysine is present on Lys14. 2 residues coordinate substrate: Asn123 and Thr173. The Proton acceptor role is filled by Lys175. Lys177 contacts substrate. Mg(2+) is bound by residues Lys201, Asp203, and Glu204. Lys201 carries the post-translational modification N6-carboxylysine. The Proton acceptor role is filled by His294. Substrate is bound by residues Arg295, His327, and Ser379.

It belongs to the RuBisCO large chain family. Type I subfamily. Heterohexadecamer of 8 large chains and 8 small chains; disulfide-linked. The disulfide link is formed within the large subunit homodimers. It depends on Mg(2+) as a cofactor. The disulfide bond which can form in the large chain dimeric partners within the hexadecamer appears to be associated with oxidative stress and protein turnover.

It localises to the plastid. It is found in the chloroplast. The catalysed reaction is 2 (2R)-3-phosphoglycerate + 2 H(+) = D-ribulose 1,5-bisphosphate + CO2 + H2O. It carries out the reaction D-ribulose 1,5-bisphosphate + O2 = 2-phosphoglycolate + (2R)-3-phosphoglycerate + 2 H(+). Its function is as follows. RuBisCO catalyzes two reactions: the carboxylation of D-ribulose 1,5-bisphosphate, the primary event in carbon dioxide fixation, as well as the oxidative fragmentation of the pentose substrate in the photorespiration process. Both reactions occur simultaneously and in competition at the same active site. The chain is Ribulose bisphosphate carboxylase large chain from Picea sitchensis (Sitka spruce).